Here is a 147-residue protein sequence, read N- to C-terminus: Organic hydroperoxide resistance transcriptional regulator (147 aa).

The region spanning 11–141 is the HTH marR-type domain; the sequence is ENQLCFLLYA…LKSALYTLLE (131 aa). Position 15 is a cysteine sulfenic acid (-SOH); alternate (C15). C15 is modified (S-bacillithiol cysteine disulfide; alternate). S-cysteinyl cysteine; alternate is present on C15. Positions 15-16 form a cross-link, n,N-(cysteine-1,S-diyl)phenylalanine (Cys-Phe); alternate; it reads CF. Positions 57–80 form a DNA-binding region, H-T-H motif; sequence VKKMGEQLYLDSGTLTPMLKRMEQ.

As to quaternary structure, homodimer. Cys-15 is oxidized by organic peroxides to cysteine sulfenic acid (Cys-SOH). This can react with the alpha-amido of the following residue to form the sulfenamide cross-link. Oxidation or cross-linking results in the loss of DNA-binding activity and the inactivation of repressor function. Both the cysteine sulfenic acid and the sulfenamide cross-link can react with free cysteine or bacillithiol (BSH) to form mixed disulfides. Further reduction of OhrR by free sulfhydryl compounds restores repressor activity.

The protein localises to the cytoplasm. Inactivated by oxidation of Cys-15 to a sulfenic acid. Organic peroxide sensor. Represses the expression of the peroxide-inducible gene ohrA by cooperative binding to two inverted repeat elements. The protein is Organic hydroperoxide resistance transcriptional regulator (ohrR) of Bacillus subtilis (strain 168).